The following is a 198-amino-acid chain: dCTP deaminase (198 aa).

DCTP-binding positions include 110–115 (RSSLAR), Asp128, 136–138 (VLE), Tyr171, Lys178, and Gln182. Glu138 (proton donor/acceptor) is an active-site residue. The segment at 168–198 (ARPYNKREDAKYRDQKGAVASRISQDEKVNK) is disordered. Over residues 172-183 (NKREDAKYRDQK) the composition is skewed to basic and acidic residues.

It belongs to the dCTP deaminase family. Homotrimer.

It catalyses the reaction dCTP + H2O + H(+) = dUTP + NH4(+). Its pathway is pyrimidine metabolism; dUMP biosynthesis; dUMP from dCTP (dUTP route): step 1/2. Its function is as follows. Catalyzes the deamination of dCTP to dUTP. This chain is dCTP deaminase, found in Colwellia psychrerythraea (strain 34H / ATCC BAA-681) (Vibrio psychroerythus).